The sequence spans 429 residues: Sex determination protein fox-1 (429 aa).

Residues 156-180 show a composition bias toward low complexity; the sequence is ATTAGSTNGSAAVTQPDPSTSSGPD. The tract at residues 156–188 is disordered; it reads ATTAGSTNGSAAVTQPDPSTSSGPDGPKRLHVS. The RRM domain occupies 183-259; sequence KRLHVSNIPF…RKIEVNCATA (77 aa).

In terms of assembly, interacts with sup-12. In males and hermaphrodites expressed in a subset of cells in the head and tail. Expressed in the pharynx, intestine and in muscles from the vulva and body wall.

The protein localises to the nucleus. In terms of biological role, RNA-binding protein that regulates tissue-specific alternative splicing events by binding to 5'-UGCAUG-3' and 5'-GCACG-3' elements. Also binds to poly(A), poly(G), poly(C), or poly(U) stretches of RNA. Plays a role in the sex determination pathway and X chromosome dosage compensation, and together with sex-1 is involved in making the distinction between one and two X-chromosomes. Binds to 5'-GCAUG-3' and 5'-GCACG-3' elements in intron 6 of the pre-mRNA of the sex-determining factor xol-1 to promote its alternative splicing and together with sex-1 negatively regulates the expression of xol-1 to promote hermaphrodite development. Negatively regulates the expression of the active isoform of xol-1 (isoform b) by promoting intron 6 retention and the deletion of exon 7 coding sequences in hermaphrodite embryos. Furthermore, binding to the pre-mRNA of xol-1 can also direct the use of an alternative 3' splice site enabling the xol-1 transcript to be trans-spliced to unrelated genes on chromosome 2, which also leads to xol-1 exon 7 deletion. Does not seem to regulate the retention of introns 1 to 5 of xol-1 pre-mRNA. Plays a role in the association of the dosage compensation complex proteins dpy-27 and sdc-3 with the hermaphrodite X chromosomes. Binds to 5'-UGCAUG-3' elements in intron 7 of the pre-mRNA of unc-32 to promote its alternative splicing in neuronal tissues. Binds to 5'-UGCAUG-3' elements in intron 4 of the pre-mRNA of egl-15 to promote its alternative splicing in body wall muscle tissues. Promotes binding of RNA-binding protein sup-12 to target RNA. Plays a role in male mating behavior. This chain is Sex determination protein fox-1, found in Caenorhabditis elegans.